The chain runs to 292 residues: NAD kinase (292 aa).

Residue D73 is the Proton acceptor of the active site. NAD(+) contacts are provided by residues D73–G74, N147–E148, H158, R175, D177, T188–S193, and Q247.

The protein belongs to the NAD kinase family. Requires a divalent metal cation as cofactor.

Its subcellular location is the cytoplasm. The catalysed reaction is NAD(+) + ATP = ADP + NADP(+) + H(+). Functionally, involved in the regulation of the intracellular balance of NAD and NADP, and is a key enzyme in the biosynthesis of NADP. Catalyzes specifically the phosphorylation on 2'-hydroxyl of the adenosine moiety of NAD to yield NADP. This Serratia proteamaculans (strain 568) protein is NAD kinase.